We begin with the raw amino-acid sequence, 376 residues long: MARVEL domain-containing protein 3 (376 aa).

Residues 1 to 95 (MKNTSGHREP…EKSRQSRARP (95 aa)) show a composition bias toward basic and acidic residues. A disordered region spans residues 1-134 (MKNTSGHREP…GRRGLESERA (134 aa)). Over 1–173 (MKNTSGHREP…HKCRYLCTGR (173 aa)) the chain is Cytoplasmic. Positions 168 to 361 (YLCTGRACWQ…GAVLAFRGYR (194 aa)) constitute an MARVEL domain. Residues 174 to 194 (ACWQMLKALLNLLILACSSVS) traverse the membrane as a helical segment. Residues 195-247 (YNSTGGYTGITSLGGIYYYQYGGAYSGFDGADGERAQQLDVQFYQLKLPTVTA) are Extracellular-facing. A helical membrane pass occupies residues 248–268 (AMAYSGALMTFSCLTLLAGAL). The Cytoplasmic segment spans residues 269–275 (RVPWHCP). Residues 276–296 (LWLVIEGLMDALIAGAYVPGL) form a helical membrane-spanning segment. At 297-335 (YFFFQHLSAAYSSDVCKERETLYQSKGYSGFNCGVHGGD) the chain is on the extracellular side. A helical transmembrane segment spans residues 336–356 (IGAGVFAAMAIGVFAVGAVLA). Topologically, residues 357-376 (FRGYRKVKKLKEKPTEMLEF) are cytoplasmic.

Widely expressed with highest levels in small intestine, colon, stomach and lung. Liver expresses only isoform 2.

It is found in the membrane. Its subcellular location is the cell junction. It localises to the tight junction. Its function is as follows. As a component of tight junctions, plays a role in paracellular ion conductivity. The protein is MARVEL domain-containing protein 3 (Marveld3) of Mus musculus (Mouse).